The primary structure comprises 209 residues: Orotate phosphoribosyltransferase (209 aa).

5-phospho-alpha-D-ribose 1-diphosphate contacts are provided by residues arginine 96, lysine 100, histidine 102, and 122–130; that span reads EDLISTGGS. Serine 126 is an orotate binding site.

Belongs to the purine/pyrimidine phosphoribosyltransferase family. PyrE subfamily. As to quaternary structure, homodimer. Mg(2+) is required as a cofactor.

The catalysed reaction is orotidine 5'-phosphate + diphosphate = orotate + 5-phospho-alpha-D-ribose 1-diphosphate. It functions in the pathway pyrimidine metabolism; UMP biosynthesis via de novo pathway; UMP from orotate: step 1/2. Catalyzes the transfer of a ribosyl phosphate group from 5-phosphoribose 1-diphosphate to orotate, leading to the formation of orotidine monophosphate (OMP). The sequence is that of Orotate phosphoribosyltransferase from Lactococcus lactis subsp. cremoris (strain SK11).